A 341-amino-acid polypeptide reads, in one-letter code: MANLDTQFQEFYGELQITVTKKQALITSHNNLRTKIQKYFAKNHPEYVPSFYIQGSYKMGTTIRTRDDECDLDDGCYFIPKPEVKGITLQNWVMDAVNGTVGATPVHKNKCIRVNYAAGYHIDLPVYRKERCNDNTEHPELAVRDGEYELSDPREIVQWFNSKKKDNPVLIRLVSYLKSWCDTVRGFMPPGLAMTILASKYQKKHEGRDDIALRDTLKSIRTALQANFSCVVPGTPYDDLFESYDSNRQEKFMSELNGFIEDADRAVNEKNKLKASKLWKKHLGNRFHLAPDENDAEMSKLDKLRDIGNKVLTGIATTAHNGYIHAAEGVKNVSHRNYGNE.

S56 serves as a coordination point for ATP. Catalysis depends on residues D71 and D73. Residue D73 participates in Mg(2+) binding. N109 serves as a coordination point for ATP. Residue D123 is part of the active site. D123 is a Mg(2+) binding site. Residues L192 and D238 each coordinate ATP.

It belongs to the CD-NTase family. B04 subfamily. In terms of assembly, monomer. It depends on Mg(2+) as a cofactor.

The catalysed reaction is GTP + ATP = 3',3'-cGAMP + 2 diphosphate. Its function is as follows. Cyclic nucleotide synthase (second messenger synthase) of a CBASS antivirus system. CBASS (cyclic oligonucleotide-based antiphage signaling system) provides immunity against bacteriophage. The CD-NTase protein synthesizes cyclic nucleotides in response to infection; these serve as specific second messenger signals. The signals activate a diverse range of effectors, leading to bacterial cell death and thus abortive phage infection. A type II-A(GA) CBASS system. In terms of biological role, catalyzes the synthesis of 3'3'-cyclic GMP-AMP (3'3'-cGAMP) from GTP and ATP, a second messenger in cell signal transduction. May make another product. Controls the activity of the CBASS cGAMP-activated phospholipase effector protein. The chain is Cyclic GMP-AMP synthase from Bacteroides fragilis.